The sequence spans 197 residues: Segregation and condensation protein B (197 aa).

The protein belongs to the ScpB family. As to quaternary structure, homodimer. Homodimerization may be required to stabilize the binding of ScpA to the Smc head domains. Component of a cohesin-like complex composed of ScpA, ScpB and the Smc homodimer, in which ScpA and ScpB bind to the head domain of Smc. The presence of the three proteins is required for the association of the complex with DNA.

Its subcellular location is the cytoplasm. In terms of biological role, participates in chromosomal partition during cell division. May act via the formation of a condensin-like complex containing Smc and ScpA that pull DNA away from mid-cell into both cell halves. The protein is Segregation and condensation protein B of Malacoplasma penetrans (strain HF-2) (Mycoplasma penetrans).